Reading from the N-terminus, the 37-residue chain is M-oxotoxin-Ot2d (37 aa).

In terms of tissue distribution, expressed by the venom gland.

The protein resides in the secreted. Functionally, disrupts biological membranes, particularly those rich in phosphocholine. Has antimicrobial activity against Gram-negative bacterium E.coli, Gram-positive bacteria B.subtilis and S.aureus, and hemolytic activity against sheep, pig and guinea pig red blood cells. Has insecticidal activity against S.frugiperda ovarian cells by opening non-selective ion channels. Enhances the insecticidal activity of spider venom neurotoxic peptides. The protein is M-oxotoxin-Ot2d of Oxyopes takobius (Lynx spider).